A 185-amino-acid polypeptide reads, in one-letter code: MINQIDIKTRERMEACIQTFHNNITNIKTGRASPTLLHNIYIEYFGSKTPLRQVSNIIVEDSHTLKINVFDDSITSLIRKSILNSNLDLNPVLQGKDIIIPIPRLTEERRKQLIKVIRGDAESSRIQIRNIRRDANDKVKRLLKDKIISEDNEHTSQSKIQIMTNEYIKKIDCILEKKEKELMKF.

It belongs to the RRF family.

The protein localises to the cytoplasm. Responsible for the release of ribosomes from messenger RNA at the termination of protein biosynthesis. May increase the efficiency of translation by recycling ribosomes from one round of translation to another. This chain is Ribosome-recycling factor, found in Buchnera aphidicola subsp. Acyrthosiphon pisum (strain APS) (Acyrthosiphon pisum symbiotic bacterium).